A 96-amino-acid polypeptide reads, in one-letter code: Small ribosomal subunit protein bS16 (96 aa).

Belongs to the bacterial ribosomal protein bS16 family.

This is Small ribosomal subunit protein bS16 from Oenococcus oeni (strain ATCC BAA-331 / PSU-1).